We begin with the raw amino-acid sequence, 74 residues long: Kappa-stichotoxin-Shd5a (74 aa).

A signal peptide spans 1–22; sequence MKFQVIAAVLLIAFCLCVVVTA. Residues 23–39 constitute a propeptide that is removed on maturation; it reads RMELQDVEDVENGFQKR. Positions 42-74 constitute a ShKT domain; it reads CIDTIPQSRCTAFQCKHSMKYRLSFCRKTCGTC. Disulfide bonds link cysteine 42-cysteine 74, cysteine 51-cysteine 67, and cysteine 56-cysteine 71.

Belongs to the sea anemone type 1 potassium channel toxin family. Type 1a subfamily.

The protein resides in the secreted. It is found in the nematocyst. In terms of biological role, inhibits voltage-gated potassium channels (Kv) with higher potency for Kv1.1/KCNA1 and Kv1.3/KCNA3. The chain is Kappa-stichotoxin-Shd5a from Stichodactyla haddoni (Saddle carpet anemone).